The primary structure comprises 328 residues: Purple acid phosphatase 7 (328 aa).

The N-terminal stretch at 1–24 (MKMHVCFSVILMFLSIFFINGALS) is a signal peptide. Residue aspartate 48 coordinates Fe cation. The N-linked (GlcNAc...) asparagine glycan is linked to asparagine 56. Aspartate 81 and tyrosine 84 together coordinate Fe cation. Position 81 (aspartate 81) interacts with Zn(2+). Zn(2+)-binding residues include asparagine 119 and histidine 213. Catalysis depends on histidine 222, which acts as the Proton donor. Histidine 248 contributes to the Zn(2+) binding site. 248–250 (HDH) contacts substrate. Residue histidine 250 participates in Fe cation binding.

The protein belongs to the metallophosphoesterase superfamily. Purple acid phosphatase family. In terms of assembly, homodimer. The cofactor is Fe cation. It depends on Zn(2+) as a cofactor. Expressed in roots, stems, leaves, flowers and siliques.

The protein localises to the secreted. It catalyses the reaction a phosphate monoester + H2O = an alcohol + phosphate. The protein is Purple acid phosphatase 7 (PAP7) of Arabidopsis thaliana (Mouse-ear cress).